We begin with the raw amino-acid sequence, 83 residues long: Small ribosomal subunit protein bS18A (83 aa).

Belongs to the bacterial ribosomal protein bS18 family. Part of the 30S ribosomal subunit. Forms a tight heterodimer with protein bS6.

Its function is as follows. Binds as a heterodimer with protein bS6 to the central domain of the 16S rRNA, where it helps stabilize the platform of the 30S subunit. The chain is Small ribosomal subunit protein bS18A from Nocardia farcinica (strain IFM 10152).